We begin with the raw amino-acid sequence, 109 residues long: Glutaredoxin-8 (109 aa).

The region spanning 5–109 (VTKAEEMIKS…EELTKIGLLP (105 aa)) is the Glutaredoxin domain. Cysteine 25 and cysteine 28 form a disulfide bridge.

Belongs to the glutaredoxin family. Monomer.

Its subcellular location is the cytoplasm. In terms of biological role, glutathione-dependent oxidoreductase with lower activity compared to the other members of the glutaredoxin family. The disulfide bond functions as an electron carrier in the glutathione-dependent synthesis of deoxyribonucleotides by the enzyme ribonucleotide reductase. The polypeptide is Glutaredoxin-8 (GRX8) (Saccharomyces cerevisiae (strain ATCC 204508 / S288c) (Baker's yeast)).